The sequence spans 282 residues: Acetylglutamate kinase (282 aa).

Substrate is bound by residues 62 to 63, arginine 84, and asparagine 178; that span reads GG.

It belongs to the acetylglutamate kinase family. ArgB subfamily.

The protein resides in the cytoplasm. The catalysed reaction is N-acetyl-L-glutamate + ATP = N-acetyl-L-glutamyl 5-phosphate + ADP. It functions in the pathway amino-acid biosynthesis; L-arginine biosynthesis; N(2)-acetyl-L-ornithine from L-glutamate: step 2/4. In terms of biological role, catalyzes the ATP-dependent phosphorylation of N-acetyl-L-glutamate. This chain is Acetylglutamate kinase, found in Thermotoga neapolitana (strain ATCC 49049 / DSM 4359 / NBRC 107923 / NS-E).